The sequence spans 79 residues: Acyl carrier protein (79 aa).

The Carrier domain occupies 2–77; the sequence is ADFEARVKEI…SAIDYVKTHV (76 aa). Position 37 is an O-(pantetheine 4'-phosphoryl)serine (Ser37).

Belongs to the acyl carrier protein (ACP) family. In terms of processing, 4'-phosphopantetheine is transferred from CoA to a specific serine of apo-ACP by AcpS. This modification is essential for activity because fatty acids are bound in thioester linkage to the sulfhydryl of the prosthetic group.

Its subcellular location is the cytoplasm. The protein operates within lipid metabolism; fatty acid biosynthesis. Carrier of the growing fatty acid chain in fatty acid biosynthesis. This Endomicrobium trichonymphae protein is Acyl carrier protein.